The primary structure comprises 312 residues: Methionyl-tRNA formyltransferase (312 aa).

109–112 (SLLP) contributes to the (6S)-5,6,7,8-tetrahydrofolate binding site.

The protein belongs to the Fmt family.

It catalyses the reaction L-methionyl-tRNA(fMet) + (6R)-10-formyltetrahydrofolate = N-formyl-L-methionyl-tRNA(fMet) + (6S)-5,6,7,8-tetrahydrofolate + H(+). Its function is as follows. Attaches a formyl group to the free amino group of methionyl-tRNA(fMet). The formyl group appears to play a dual role in the initiator identity of N-formylmethionyl-tRNA by promoting its recognition by IF2 and preventing the misappropriation of this tRNA by the elongation apparatus. In Nitrosospira multiformis (strain ATCC 25196 / NCIMB 11849 / C 71), this protein is Methionyl-tRNA formyltransferase.